The chain runs to 75 residues: Small ribosomal subunit protein bS18 (75 aa).

It belongs to the bacterial ribosomal protein bS18 family. In terms of assembly, part of the 30S ribosomal subunit. Forms a tight heterodimer with protein bS6.

Functionally, binds as a heterodimer with protein bS6 to the central domain of the 16S rRNA, where it helps stabilize the platform of the 30S subunit. This Sodalis glossinidius (strain morsitans) protein is Small ribosomal subunit protein bS18.